The chain runs to 227 residues: Paired immunoglobulin-like type 2 receptor beta (227 aa).

A signal peptide spans 1–19 (MGRPLLLPLLLLLQPPAFL). Over 20–191 (QPGGSTGSGP…WHLSLDTAIR (172 aa)) the chain is Extracellular. An Ig-like V-type domain is found at 21–143 (PGGSTGSGPS…SGRQQLQSIK (123 aa)). The N-linked (GlcNAc...) asparagine glycan is linked to N100. Residues 192 to 212 (VALAVAVLKTVILGLLCLLLL) form a helical membrane-spanning segment. At 213 to 227 (WWRRRKGSRAPSSDF) the chain is on the cytoplasmic side.

It localises to the membrane. Its function is as follows. Paired receptors consist of highly related activating and inhibitory receptors and are widely involved in the regulation of the immune system. PILRB is thought to act as a cellular signaling activating receptor that associates with ITAM-bearing adapter molecules on the cell surface. The chain is Paired immunoglobulin-like type 2 receptor beta (PILRB) from Homo sapiens (Human).